Here is a 336-residue protein sequence, read N- to C-terminus: Holliday junction branch migration complex subunit RuvB (336 aa).

The segment at 1 to 182 is large ATPase domain (RuvB-L); that stretch reads MAKRMITTEL…FGVVHRLEFY (182 aa). ATP is bound by residues L21, R22, G63, K66, T67, T68, 129 to 131, R172, Y182, and R219; that span reads EDY. T67 contacts Mg(2+). The segment at 183–253 is small ATPAse domain (RuvB-S); it reads TTEELKEIIT…VARFALDILE (71 aa). A head domain (RuvB-H) region spans residues 256 to 336; that stretch reads KLGLDHIDRQ…GLPYENKELS (81 aa). DNA contacts are provided by R311 and R316.

Belongs to the RuvB family. In terms of assembly, homohexamer. Forms an RuvA(8)-RuvB(12)-Holliday junction (HJ) complex. HJ DNA is sandwiched between 2 RuvA tetramers; dsDNA enters through RuvA and exits via RuvB. An RuvB hexamer assembles on each DNA strand where it exits the tetramer. Each RuvB hexamer is contacted by two RuvA subunits (via domain III) on 2 adjacent RuvB subunits; this complex drives branch migration. In the full resolvosome a probable DNA-RuvA(4)-RuvB(12)-RuvC(2) complex forms which resolves the HJ.

The protein resides in the cytoplasm. It catalyses the reaction ATP + H2O = ADP + phosphate + H(+). In terms of biological role, the RuvA-RuvB-RuvC complex processes Holliday junction (HJ) DNA during genetic recombination and DNA repair, while the RuvA-RuvB complex plays an important role in the rescue of blocked DNA replication forks via replication fork reversal (RFR). RuvA specifically binds to HJ cruciform DNA, conferring on it an open structure. The RuvB hexamer acts as an ATP-dependent pump, pulling dsDNA into and through the RuvAB complex. RuvB forms 2 homohexamers on either side of HJ DNA bound by 1 or 2 RuvA tetramers; 4 subunits per hexamer contact DNA at a time. Coordinated motions by a converter formed by DNA-disengaged RuvB subunits stimulates ATP hydrolysis and nucleotide exchange. Immobilization of the converter enables RuvB to convert the ATP-contained energy into a lever motion, pulling 2 nucleotides of DNA out of the RuvA tetramer per ATP hydrolyzed, thus driving DNA branch migration. The RuvB motors rotate together with the DNA substrate, which together with the progressing nucleotide cycle form the mechanistic basis for DNA recombination by continuous HJ branch migration. Branch migration allows RuvC to scan DNA until it finds its consensus sequence, where it cleaves and resolves cruciform DNA. This chain is Holliday junction branch migration complex subunit RuvB, found in Lachnoclostridium phytofermentans (strain ATCC 700394 / DSM 18823 / ISDg) (Clostridium phytofermentans).